We begin with the raw amino-acid sequence, 182 residues long: UPF0215 protein Pcal_0119 (182 aa).

It belongs to the UPF0215 family.

This chain is UPF0215 protein Pcal_0119, found in Pyrobaculum calidifontis (strain DSM 21063 / JCM 11548 / VA1).